The chain runs to 318 residues: 5'-3' exonuclease (318 aa).

One can recognise a 5'-3' exonuclease domain in the interval 194-278 (AYAELALLRG…ATDAPVTLST (85 aa)).

Functionally, 5'-3' exonuclease acting preferentially on double-stranded DNA. This is 5'-3' exonuclease from Mycobacterium tuberculosis (strain ATCC 25618 / H37Rv).